The sequence spans 569 residues: AA9 family lytic polysaccharide monooxygenase A (569 aa).

An N-terminal signal peptide occupies residues 1–16 (MRIFSLALGFLPLVAG). Cu(2+) is bound by residues histidine 17 and histidine 99. The cysteines at positions 59 and 189 are disulfide-linked. Residue asparagine 112 is glycosylated (N-linked (GlcNAc...) asparagine). O2-binding residues include histidine 174 and glutamine 184. Tyrosine 186 is a binding site for Cu(2+). N-linked (GlcNAc...) asparagine glycosylation is found at asparagine 244 and asparagine 381. The span at 399–424 (AADATATATATTEDAEATTAAEAAAT) shows a compositional bias: low complexity. Residues 399 to 439 (AADATATATATTEDAEATTAAEAAATSGAGRPGRGHGHGRG) form a disordered region. A glycan (N-linked (GlcNAc...) asparagine) is linked at asparagine 472.

It belongs to the polysaccharide monooxygenase AA9 family. Cu(2+) serves as cofactor.

Its subcellular location is the secreted. It catalyses the reaction [(1-&gt;4)-beta-D-glucosyl]n+m + reduced acceptor + O2 = 4-dehydro-beta-D-glucosyl-[(1-&gt;4)-beta-D-glucosyl]n-1 + [(1-&gt;4)-beta-D-glucosyl]m + acceptor + H2O.. In terms of biological role, lytic polysaccharide monooxygenase (LPMO) that depolymerizes crystalline and amorphous polysaccharides via the oxidation of scissile alpha- or beta-(1-4)-glycosidic bonds, yielding C4 oxidation products. Catalysis by LPMOs requires the reduction of the active-site copper from Cu(II) to Cu(I) by a reducing agent and H(2)O(2) or O(2) as a cosubstrate. The protein is AA9 family lytic polysaccharide monooxygenase A of Emericella nidulans (strain FGSC A4 / ATCC 38163 / CBS 112.46 / NRRL 194 / M139) (Aspergillus nidulans).